Here is a 345-residue protein sequence, read N- to C-terminus: Phosphoribosylformylglycinamidine cyclo-ligase (345 aa).

This sequence belongs to the AIR synthase family.

Its subcellular location is the cytoplasm. The catalysed reaction is 2-formamido-N(1)-(5-O-phospho-beta-D-ribosyl)acetamidine + ATP = 5-amino-1-(5-phospho-beta-D-ribosyl)imidazole + ADP + phosphate + H(+). It participates in purine metabolism; IMP biosynthesis via de novo pathway; 5-amino-1-(5-phospho-D-ribosyl)imidazole from N(2)-formyl-N(1)-(5-phospho-D-ribosyl)glycinamide: step 2/2. The protein is Phosphoribosylformylglycinamidine cyclo-ligase of Limosilactobacillus reuteri (strain DSM 20016) (Lactobacillus reuteri).